The primary structure comprises 510 residues: NAD(P)H-quinone oxidoreductase subunit 2 B, chloroplastic (510 aa).

Helical transmembrane passes span 26–46 (LFDGSFIFPEGILIFGLILLL), 57–77 (IPWFYFISSISLVMSITALLF), 99–119 (IFQFLILLCSTLCIPLSVEYI), 124–144 (MAITEFLLFVLTATLGGMFLC), 149–169 (LITIFVAPECFSLCSYLLSGY), 183–203 (YLLMGGASSSILVHGFSWLYG), 227–247 (PGISIALIFITVGIGFKLSPA), 295–315 (WHPLLEILAILSMILGNLIAI), 323–342 (MLAYSSIGQIGYVIIGIIVG), 354–374 (YMLFYISMNLGTFACIVLFGL), 395–415 (ALSLALCLLSLGGLPPLAGFF), 418–438 (LHLFWCGWQAGLYFLVSIGLF), and 484–504 (MIVCVIASTIPGISMNPIIAI).

It belongs to the complex I subunit 2 family. In terms of assembly, NDH is composed of at least 16 different subunits, 5 of which are encoded in the nucleus.

It is found in the plastid. Its subcellular location is the chloroplast thylakoid membrane. The enzyme catalyses a plastoquinone + NADH + (n+1) H(+)(in) = a plastoquinol + NAD(+) + n H(+)(out). The catalysed reaction is a plastoquinone + NADPH + (n+1) H(+)(in) = a plastoquinol + NADP(+) + n H(+)(out). NDH shuttles electrons from NAD(P)H:plastoquinone, via FMN and iron-sulfur (Fe-S) centers, to quinones in the photosynthetic chain and possibly in a chloroplast respiratory chain. The immediate electron acceptor for the enzyme in this species is believed to be plastoquinone. Couples the redox reaction to proton translocation, and thus conserves the redox energy in a proton gradient. The protein is NAD(P)H-quinone oxidoreductase subunit 2 B, chloroplastic of Oenothera argillicola (Appalachian evening primrose).